Consider the following 406-residue polypeptide: Elongation factor Tu-B (406 aa).

Residues 10 to 215 (KPHVNVGTIG…AIDEYIPTPV (206 aa)) form the tr-type G domain. Positions 19–26 (GHVDHGKT) are G1. 19–26 (GHVDHGKT) contacts GTP. A Mg(2+)-binding site is contributed by Thr-26. Positions 61–65 (GITIN) are G2. The interval 82–85 (DCPG) is G3. GTP-binding positions include 82–86 (DCPGH) and 137–140 (NKVD). The G4 stretch occupies residues 137–140 (NKVD). Residues 175-177 (SAL) form a G5 region. Thr-395 bears the Phosphothreonine mark.

Belongs to the TRAFAC class translation factor GTPase superfamily. Classic translation factor GTPase family. EF-Tu/EF-1A subfamily. As to quaternary structure, monomer. Phosphorylated on a threonine.

It localises to the cytoplasm. The enzyme catalyses GTP + H2O = GDP + phosphate + H(+). Functionally, GTP hydrolase that promotes the GTP-dependent binding of aminoacyl-tRNA to the A-site of ribosomes during protein biosynthesis. Protects glycyl-tRNA(Gly) from hydrolysis by E.coli D-aminoacyl-tRNA deacylase (dtd). The polypeptide is Elongation factor Tu-B (Thermus thermophilus (strain ATCC 27634 / DSM 579 / HB8)).